A 178-amino-acid polypeptide reads, in one-letter code: Small ribosomal subunit protein uS5 (178 aa).

Positions Phe15–Val78 constitute an S5 DRBM domain.

Belongs to the universal ribosomal protein uS5 family. As to quaternary structure, part of the 30S ribosomal subunit. Contacts proteins S4 and S8.

Functionally, with S4 and S12 plays an important role in translational accuracy. Its function is as follows. Located at the back of the 30S subunit body where it stabilizes the conformation of the head with respect to the body. This is Small ribosomal subunit protein uS5 from Thermotoga sp. (strain RQ2).